The primary structure comprises 45 residues: Temporin-SHf (45 aa).

Positions 1–10 (FLGTINLSLC) are cleaved as a signal peptide. A propeptide spanning residues 11 to 35 (EEERDADEEERRDEPDESNVEVKKR) is cleaved from the precursor. Phe43 is subject to Phenylalanine amide.

It belongs to the frog skin active peptide (FSAP) family. Temporin subfamily.

It is found in the secreted. The protein resides in the target cell membrane. In terms of biological role, non-amphipathic alpha-helical antimicrobial peptide with potent activity against some Gram-positive bacteria (including methicillin-resistant Staphylococcus aureus (MRSA)), weak activity against Gram-negative bacteria and no activity against fungi. Permeabilizates membranes through a detergent-like effect probably via the carpet mechanism. More precisely, it strongly and selectively perturbs anionic bilayers membranes by interacting with the polar headgroups and the glycerol backbone region of the phospholipids, hence disrupting the acyl chain packing of the bilayer. Is not active against Leishmania (promastigote and axenic amastigote forms). Does not show hemolytic activity. Does not show toxicity for human THP-1-derived macrophages. The chain is Temporin-SHf from Pelophylax saharicus (Sahara frog).